Consider the following 274-residue polypeptide: Elongation factor Ts (274 aa).

The tract at residues 76 to 79 (TDFV) is involved in Mg(2+) ion dislocation from EF-Tu.

It belongs to the EF-Ts family.

It localises to the cytoplasm. Functionally, associates with the EF-Tu.GDP complex and induces the exchange of GDP to GTP. It remains bound to the aminoacyl-tRNA.EF-Tu.GTP complex up to the GTP hydrolysis stage on the ribosome. In Mycobacterium sp. (strain JLS), this protein is Elongation factor Ts.